The sequence spans 156 residues: Arginine repressor (156 aa).

This sequence belongs to the ArgR family.

Its subcellular location is the cytoplasm. It participates in amino-acid biosynthesis; L-arginine biosynthesis [regulation]. In terms of biological role, regulates arginine biosynthesis genes. This is Arginine repressor from Vibrio atlanticus (strain LGP32) (Vibrio splendidus (strain Mel32)).